The chain runs to 262 residues: Small ribosomal subunit protein uS2 (262 aa).

This sequence belongs to the universal ribosomal protein uS2 family.

The polypeptide is Small ribosomal subunit protein uS2 (Borreliella burgdorferi (strain ZS7) (Borrelia burgdorferi)).